Reading from the N-terminus, the 120-residue chain is Large ribosomal subunit protein uL18 (120 aa).

The disordered stretch occupies residues 1 to 25; the sequence is MKQTRTAARQSRHQRIRRKVKGTSD. The segment covering 10–21 has biased composition (basic residues); that stretch reads QSRHQRIRRKVK.

Belongs to the universal ribosomal protein uL18 family. In terms of assembly, part of the 50S ribosomal subunit; part of the 5S rRNA/L5/L18/L25 subcomplex. Contacts the 5S and 23S rRNAs.

In terms of biological role, this is one of the proteins that bind and probably mediate the attachment of the 5S RNA into the large ribosomal subunit, where it forms part of the central protuberance. This Thermosynechococcus vestitus (strain NIES-2133 / IAM M-273 / BP-1) protein is Large ribosomal subunit protein uL18.